Here is a 558-residue protein sequence, read N- to C-terminus: Phosphatidylserine lipase ABHD16A (558 aa).

The next 2 helical transmembrane spans lie at 60–80 (ILAL…FAFF) and 93–113 (VVPF…VACL). Residues 114–558 (RGIGRWTNPQ…AQNFQMPWHL (445 aa)) are Cytoplasmic-facing. The AB hydrolase-1 domain maps to 281–407 (LVICCEGNAG…LVTRTVRQHL (127 aa)). Active-site charge relay system residues include Ser355, Asp430, and His507.

This sequence belongs to the AB hydrolase superfamily. ABHD16 family.

It is found in the membrane. The enzyme catalyses 1-heptadecanoyl-2-(5Z,8Z,11Z,14Z-eicosatetraenoyl)-sn-glycero-3-phosphoserine + H2O = 1-heptadecanoyl-sn-glycero-3-phosphoserine + (5Z,8Z,11Z,14Z)-eicosatetraenoate + H(+). It catalyses the reaction 1-hexadecanoyl-2-(9Z-octadecenoyl)-sn-glycero-3-phospho-L-serine + H2O = 1-hexadecanoyl-sn-glycero-3-phospho-L-serine + (9Z)-octadecenoate + H(+). It carries out the reaction 1-octadecanoyl-2-(9Z,12Z-octadecadienoyl)-sn-glycero-3-phosphoserine + H2O = 1-octadecanoyl-sn-glycero-3-phosphoserine + (9Z,12Z)-octadecadienoate + H(+). The catalysed reaction is 1-heptadecanoyl-2-(5Z,8Z,11Z,14Z-eicosatetraenoyl)-sn-glycero-3-phosphocholine + H2O = 1-heptadecanoyl-sn-glycero-3-phosphocholine + (5Z,8Z,11Z,14Z)-eicosatetraenoate + H(+). The enzyme catalyses 1-hexadecanoyl-2-(9Z-octadecenoyl)-sn-glycero-3-phosphoglycerol + H2O = 1-hexadecanoyl-sn-glycero-3-phosphoglycerol + (9Z)-octadecenoate + H(+). It catalyses the reaction 1-hexadecanoyl-2-(9Z-octadecenoyl)-sn-glycero-3-phospho-(1D-myo-inositol) + H2O = 1-hexadecanoyl-sn-glycero-3-phospho-(1D-myo-inositol) + (9Z)-octadecenoate + H(+). It carries out the reaction 1-heptadecanoyl-2-(5Z,8Z,11Z,14Z-eicosatetraenoyl)-sn-glycero-3-phosphoethanolamine + H2O = 1-heptadecanoyl-sn-glycero-3-phosphoethanolamine + (5Z,8Z,11Z,14Z)-eicosatetraenoate + H(+). The catalysed reaction is 1-hexadecanoyl-2-(9Z-octadecenoyl)-sn-glycero-3-phospho-(1'-sn-glycerol) + H2O = 1-hexadecanoyl-sn-glycero-3-phospho-(1'-sn-glycerol) + (9Z)-octadecenoate + H(+). The enzyme catalyses Hydrolyzes glycerol monoesters of long-chain fatty acids.. It catalyses the reaction 1-tetradecanoylglycerol + H2O = tetradecanoate + glycerol + H(+). It carries out the reaction 2-hexadecanoylglycerol + H2O = glycerol + hexadecanoate + H(+). The catalysed reaction is 1-(9Z-octadecenoyl)-glycerol + H2O = glycerol + (9Z)-octadecenoate + H(+). The enzyme catalyses 2-(9Z-octadecenoyl)-glycerol + H2O = glycerol + (9Z)-octadecenoate + H(+). It catalyses the reaction 2-(9Z,12Z-octadecadienoyl)-glycerol + H2O = (9Z,12Z)-octadecadienoate + glycerol + H(+). It carries out the reaction 1-(5Z,8Z,11Z,14Z-eicosatetraenoyl)-glycerol + H2O = glycerol + (5Z,8Z,11Z,14Z)-eicosatetraenoate + H(+). The catalysed reaction is 2-(5Z,8Z,11Z,14Z-eicosatetraenoyl)-glycerol + H2O = glycerol + (5Z,8Z,11Z,14Z)-eicosatetraenoate + H(+). The enzyme catalyses prostaglandin D2-1-glycerol ester + H2O = prostaglandin D2 + glycerol + H(+). It catalyses the reaction 2-glyceryl-15-deoxy-Delta(12,14)-prostaglandin J2 + H2O = 15-deoxy-Delta(12,14)-prostaglandin J2 + glycerol + H(+). It carries out the reaction 1-(9Z,12Z-octadecadienoyl)-glycerol + H2O = (9Z,12Z)-octadecadienoate + glycerol + H(+). Its activity is regulated as follows. Inhibited by beta-lactone-based lipid inhibitors, such as beta-lactone palmostatin-B. Phosphatidylserine (PS) lipase that mediates the hydrolysis of phosphatidylserine to generate lysophosphatidylserine (LPS). LPS constitutes a class of signaling lipids that regulates immunological and neurological processes. Has no activity towards diacylglycerol, triacylglycerol or lysophosphatidylserine lipase. Also has monoacylglycerol lipase activity, with preference for 1-(9Z,12Z-octadecadienoyl)-glycerol (1-LG) and 2-glyceryl-15-deoxy-Delta(12,14)-prostaglandin J2 (15d-PGJ(2)-G). This is Phosphatidylserine lipase ABHD16A from Homo sapiens (Human).